A 296-amino-acid chain; its full sequence is Ribosome biogenesis GTPase A (296 aa).

In terms of domain architecture, CP-type G spans 14 to 178; that stretch reads RRQVTEKLKL…LLDTPGILWP (165 aa). GTP is bound by residues 58-61, 130-135, and G174; these read NKAD and NVGKST.

The protein belongs to the TRAFAC class YlqF/YawG GTPase family. MTG1 subfamily. As to quaternary structure, interacts with ctc. Interacts with the immature 50S ribosome subunit. 2 molecules of rbgA bind to one 50S subunit.

The protein resides in the cytoplasm. Essential protein that is required for a late step of 50S ribosomal subunit assembly. Has GTPase activity that is stimulated by interaction with the immature 50S ribosome subunit. Binds to the 23S rRNA. Required for the association of ribosomal proteins rplP and rpmA with the large subunit. The polypeptide is Ribosome biogenesis GTPase A (Bacillus cereus (strain ATCC 14579 / DSM 31 / CCUG 7414 / JCM 2152 / NBRC 15305 / NCIMB 9373 / NCTC 2599 / NRRL B-3711)).